Consider the following 239-residue polypeptide: MNLYEYLSQGIKHFTLIDPDKSVDYLRIARYALEAGTDGILVGGSLGITASQMEKVVKDIKSVANVPVVLFPGSLSQLTDAADGVLFLSVLNSLDPYFIIGAQVHGAVLIAKHYPRLEVISTAYVIVGDGGAAGFVSMSKPIPYTRPDIATAYALAAGYIGFKALYLEAGSGAPQPVPPDMVRAVRKAFPRVLIVGGGIRSSEVARSIAREGPNVIVTGTLAEESPEKLGEIVRAIKQR.

Positions 18 and 45 each coordinate Mg(2+). Residues 166-172 (YLEAGSG), 197-198 (GG), and 219-220 (GT) each bind sn-glycerol 1-phosphate.

It belongs to the GGGP/HepGP synthase family. Group II subfamily. It depends on Mg(2+) as a cofactor.

The protein localises to the cytoplasm. The catalysed reaction is sn-glycerol 1-phosphate + (2E,6E,10E)-geranylgeranyl diphosphate = sn-3-O-(geranylgeranyl)glycerol 1-phosphate + diphosphate. It functions in the pathway membrane lipid metabolism; glycerophospholipid metabolism. In terms of biological role, prenyltransferase that catalyzes the transfer of the geranylgeranyl moiety of geranylgeranyl diphosphate (GGPP) to the C3 hydroxyl of sn-glycerol-1-phosphate (G1P). This reaction is the first ether-bond-formation step in the biosynthesis of archaeal membrane lipids. This Pyrobaculum arsenaticum (strain DSM 13514 / JCM 11321 / PZ6) protein is Geranylgeranylglyceryl phosphate synthase.